A 407-amino-acid chain; its full sequence is Protein ZNF365 (407 aa).

Serine 16 carries the post-translational modification Phosphoserine. A C2H2-type; degenerate zinc finger spans residues 26-51 (LRCPRCGDHTRFRSLSSLRAHLEFSH). The residue at position 138 (serine 138) is a Phosphoserine. Positions 169-297 (VEAVDRTIEK…QLEYYQSQQA (129 aa)) form a coiled coil. Threonine 175 carries the post-translational modification Phosphothreonine. Residues 347-392 (LKKAKDDRASMQPAKAIHEQAESSRDLCRPPKKGELLGFGRKGNIR) form a disordered region. Residues 362–381 (AIHEQAESSRDLCRPPKKGE) are compositionally biased toward basic and acidic residues. Residue serine 369 is modified to Phosphoserine.

In terms of assembly, homodimer. Interacts with NDE1 and NDEL1. Does not interact with TUBG1. Interacts with DISC1. Interacts with PARP1. Interacts with MCRS1. Isoform 1 is expressed in brain. Isoform 2 is expressed in placenta and at low level in lung and liver. Isoform 3 is expressed in kidney and pancreas. Isoform 1 is expressed exclusively in brain.

The protein resides in the cytoplasm. It localises to the cytoskeleton. The protein localises to the microtubule organizing center. Its subcellular location is the centrosome. Its function is as follows. Involved in the regulation of neurogenesis. Negatively regulates neurite outgrowth. Involved in the morphogenesis of basket cells in the somatosensory cortex during embryogenesis. Involved in the positive regulation of oligodendrocyte differentiation during postnatal growth. Involved in dendritic arborization, morphogenesis of spine density dendrite, and establishment of postsynaptic dendrite density in cortical pyramidal neurons. Involved in homologous recombination (HR) repair pathway. Required for proper resolution of DNA double-strand breaks (DSBs) by HR. Is required for recovery of stalled replication forks, and directly contributes to genomic stability. Interacts with PARP1 and mediates MRE11-dependent DNA end resection during replication fork recovery. Contributes to genomic stability by preventing telomere dysfunction. This chain is Protein ZNF365 (ZNF365), found in Homo sapiens (Human).